The following is a 430-amino-acid chain: Zinc carboxypeptidase A 1 (430 aa).

Residues Met-1 to Ala-22 form the signal peptide. Positions Gln-124 to Val-423 constitute a Peptidase M14 domain. His-187 and Glu-190 together coordinate Zn(2+). Cys-252 and Cys-275 are disulfide-bonded. His-311 lines the Zn(2+) pocket. Catalysis depends on Glu-386, which acts as the Proton donor/acceptor.

The protein belongs to the peptidase M14 family. Zn(2+) serves as cofactor.

The protein localises to the secreted. This is Zinc carboxypeptidase A 1 from Drosophila melanogaster (Fruit fly).